A 248-amino-acid polypeptide reads, in one-letter code: NADP-dependent 3-hydroxy acid dehydrogenase YdfG (248 aa).

NADP(+)-binding positions include 7 to 12 (GATAGF), 32 to 33 (RR), 54 to 55 (DV), and N81. Position 134 (S134) interacts with substrate. NADP(+)-binding positions include Y147, K151, and 177-185 (PGLVGGTEF). The Proton acceptor role is filled by Y147.

It belongs to the short-chain dehydrogenases/reductases (SDR) family. Homotetramer.

The catalysed reaction is 3-hydroxypropanoate + NADP(+) = 3-oxopropanoate + NADPH + H(+). It catalyses the reaction L-allo-threonine + NADP(+) = aminoacetone + CO2 + NADPH. NADP-dependent dehydrogenase with broad substrate specificity acting on 3-hydroxy acids. Catalyzes the NADP-dependent oxidation of L-allo-threonine to L-2-amino-3-keto-butyrate, which is spontaneously decarboxylated into aminoacetone. Also acts on D-threonine, L-serine, D-serine, D-3-hydroxyisobutyrate, L-3-hydroxyisobutyrate, D-glycerate and L-glycerate. Able to catalyze the reduction of the malonic semialdehyde to 3-hydroxypropionic acid. YdfG is apparently supplementing RutE, the presumed malonic semialdehyde reductase involved in pyrimidine degradation since both are able to detoxify malonic semialdehyde. In Escherichia coli (strain K12), this protein is NADP-dependent 3-hydroxy acid dehydrogenase YdfG.